The chain runs to 410 residues: Benzene 1,2-dioxygenase system ferredoxin--NAD(+) reductase subunit (410 aa).

4 to 35 (HVAIIGNGVAGFTTAQALRAEGYEGRISLIGE) contacts FAD. NAD(+) is bound at residue 145–173 (RLLIVGGGLIGCEVATTARKLGLSVTILE).

Belongs to the bacterial ring-hydroxylating dioxygenase ferredoxin reductase family. In terms of assembly, this dioxygenase system consists of four proteins: the two subunits of the hydroxylase component (BedC1 and BedC2), a ferredoxin (BedB) and a ferredoxin reductase (BedA). FAD is required as a cofactor.

The enzyme catalyses 2 reduced [2Fe-2S]-[ferredoxin] + NAD(+) + H(+) = 2 oxidized [2Fe-2S]-[ferredoxin] + NADH. It functions in the pathway aromatic compound metabolism; benzene degradation; catechol from benzene: step 1/2. Part of the electron transfer component of benzene 1,2-dioxygenase, transfers electrons from ferredoxin to NADH. This is Benzene 1,2-dioxygenase system ferredoxin--NAD(+) reductase subunit (bedA) from Pseudomonas putida (Arthrobacter siderocapsulatus).